Consider the following 494-residue polypeptide: Catalase isozyme 2 (494 aa).

The tract at residues 1–29 (MDPCKFRPSSSFDTKTTTTNAGQPVWNDN) is disordered. Polar residues predominate over residues 8–22 (PSSSFDTKTTTTNAG). Active-site residues include H65 and N138. Heme is bound at residue Y348.

It belongs to the catalase family. Homotetramer. Heme serves as cofactor.

Its subcellular location is the peroxisome. It localises to the glyoxysome. The enzyme catalyses 2 H2O2 = O2 + 2 H2O. Its function is as follows. Occurs in almost all aerobically respiring organisms and serves to protect cells from the toxic effects of hydrogen peroxide. The protein is Catalase isozyme 2 (CAT2) of Hordeum vulgare (Barley).